A 278-amino-acid polypeptide reads, in one-letter code: MQIVRNVPDLRAARAALTDGGRARLALVPTMGALHEGHLSLVRAAREAGHVVAASIFVNPTQFGPNEDFTRYPRDPERDCALLAEAGCALAWLPEVSTMYPPGDATSVEVAGLSVVLEGAVRPGHYRGVATVVVKLLGQVRPDAAYFGEKDWQQVQVIRRVAADLFLPVEIVVGPTLREKDGLAMSSRNRYLDPADRARAPLLHQVLRRVRAALRDGEPAAAALAAGRRALAEGGFIVDYLELVDAGTLAPLTAPDDGARLLAAARLGTTRLLDTVAV.

31-38 (MGALHEGH) contributes to the ATP binding site. Catalysis depends on His-38, which acts as the Proton donor. Residue Gln-62 participates in (R)-pantoate binding. Gln-62 contacts beta-alanine. 148–151 (GEKD) provides a ligand contact to ATP. A (R)-pantoate-binding site is contributed by Gln-154. Residues Leu-177 and 185–188 (MSSR) each bind ATP.

Belongs to the pantothenate synthetase family. As to quaternary structure, homodimer.

Its subcellular location is the cytoplasm. It catalyses the reaction (R)-pantoate + beta-alanine + ATP = (R)-pantothenate + AMP + diphosphate + H(+). Its pathway is cofactor biosynthesis; (R)-pantothenate biosynthesis; (R)-pantothenate from (R)-pantoate and beta-alanine: step 1/1. Its function is as follows. Catalyzes the condensation of pantoate with beta-alanine in an ATP-dependent reaction via a pantoyl-adenylate intermediate. The sequence is that of Pantothenate synthetase from Acidiphilium cryptum (strain JF-5).